We begin with the raw amino-acid sequence, 735 residues long: MKVYAFGFPKIGEKREFKKALEDFWKGKITENQFKEEMSELRMYMVENYRTNVDVVPSNELSYYDFVLDTAIMVGAIPERFGKYEGLSTYFEMARGRKALEMTKYFNTNYHYLVPEIESGNFELLENIPLEDFLFFRSMGIETAPRILGPFTFLYLSKKDGMWIREPGEMEKLFTRLVPVYRKVFEELVENGCGEILVDEPAFVCDLQKDHWNLIKDVYSEFSGFPLTIFTYYDSVSDYESYVSLPVKGLHLDFVSNTENLRNFEKHGFPSDKTLIAGVINGRQPWRANLKKVAELVDKLGASAISNSCPLFHLPITAQWENSLPDGLREKLAFAKEKLEELKVLKEFFEGKKVNLPEVSFEDFAVDESVSKKIKQLTPDSFRREKEYQERDRIQREELKLPLFPTTTIGSFPQTSDVRKMRARYRRGEISEEEYESFIKEQIKKVVRIQEEIGLDVLVHGEFERTDMVEFFAEKLNGIATTQNGWVLSYGSRCYRPPIIYGTVSRTGPMTLKEITYAQSLTEKPVKGMLTGPITIMGWSYYREDIPEREIAYQIALAINEEVKDLEEAGIKIVQIDEPAFREKAPVKKSKWPEYFEWAINAFNLAANARPETQIHAHMCYSDFNEIIEYIHQLEFDVISIEASRSKGEIISAFENFKGWIKQIGVGVWDIHSPAVPSVDEMKSIIERVLRILPKELIWVNPDCGLKTRNWEEVVPSLKNMVDLAKKLRKEYNNT.

Residues 15–18 and Lys-104 contribute to the 5-methyltetrahydropteroyltri-L-glutamate site; that span reads REFK. L-homocysteine contacts are provided by residues 409–411 and Glu-462; that span reads IGS. L-methionine-binding positions include 409 to 411 and Glu-462; that span reads IGS. Residues 493 to 494 and Trp-539 contribute to the 5-methyltetrahydropteroyltri-L-glutamate site; that span reads RC. Asp-577 lines the L-homocysteine pocket. Asp-577 is a binding site for L-methionine. Glu-583 lines the 5-methyltetrahydropteroyltri-L-glutamate pocket. Residues His-618, Cys-620, and Glu-642 each coordinate Zn(2+). The active-site Proton donor is His-672. Cys-704 serves as a coordination point for Zn(2+).

This sequence belongs to the vitamin-B12 independent methionine synthase family. Zn(2+) serves as cofactor.

It carries out the reaction 5-methyltetrahydropteroyltri-L-glutamate + L-homocysteine = tetrahydropteroyltri-L-glutamate + L-methionine. Its pathway is amino-acid biosynthesis; L-methionine biosynthesis via de novo pathway; L-methionine from L-homocysteine (MetE route): step 1/1. Catalyzes the transfer of a methyl group from 5-methyltetrahydrofolate to homocysteine resulting in methionine formation. This chain is 5-methyltetrahydropteroyltriglutamate--homocysteine methyltransferase, found in Thermotoga petrophila (strain ATCC BAA-488 / DSM 13995 / JCM 10881 / RKU-1).